A 323-amino-acid polypeptide reads, in one-letter code: MSGKPPAIFLMGPTAAGKTDLAIELTKVLPCELISVDSALVYRGMDIGTAKPSKEILAAHPHRLIDILDPVESYSAKQFCTDALDAMAEITARGKIPLLVGGTMLYYKALVEGLADMPPADAAVRAELEAQASALGLGELHRQLAEVDPESAARIHPNDPQRLIRALEVYRVSGESMTAHRQRQFAESRGADAGANGHLPYTVASLAIAPTDRHILHQRIALRFSQMLEQGFVDEVRSLRARSDLHAGLPSIRAVGYRQVWDYLDGHLTENEMQERGIIATRQLAKRQFTWLRGWDGVHWLDSLACDNLSRTLKYLGAVSILS.

12-19 is a binding site for ATP; it reads GPTAAGKT. Residue 14–19 participates in substrate binding; that stretch reads TAAGKT. Interaction with substrate tRNA regions lie at residues 37 to 40 and 161 to 165; these read DSAL and QRLIR.

This sequence belongs to the IPP transferase family. In terms of assembly, monomer. Requires Mg(2+) as cofactor.

It carries out the reaction adenosine(37) in tRNA + dimethylallyl diphosphate = N(6)-dimethylallyladenosine(37) in tRNA + diphosphate. Its function is as follows. Catalyzes the transfer of a dimethylallyl group onto the adenine at position 37 in tRNAs that read codons beginning with uridine, leading to the formation of N6-(dimethylallyl)adenosine (i(6)A). The sequence is that of tRNA dimethylallyltransferase from Pseudomonas entomophila (strain L48).